The primary structure comprises 111 residues: MADWARAQSPGAVEEILDRENKRMADSLASKVTRLKSLALDIDRDAEDQNRYLDGMDSDFTSMTSLLTGSVKRFSTMARSGQDNRKLLCGMAVGLIVAFFILSYFLSRART.

Over 1 to 86 the chain is Cytoplasmic; the sequence is MADWARAQSP…MARSGQDNRK (86 aa). A phosphoserine mark is found at serine 9 and serine 37. Positions 15–77 constitute a t-SNARE coiled-coil homology domain; it reads EILDRENKRM…TGSVKRFSTM (63 aa). Residues 87–107 traverse the membrane as a helical; Anchor for type IV membrane protein segment; the sequence is LLCGMAVGLIVAFFILSYFLS. The Lumenal segment spans residues 108–111; the sequence is RART.

Component of a SNARE complex consisting of STX5, YKT6, GOSR1 and BET1L. Interacts with STX5.

The protein resides in the golgi apparatus membrane. The protein localises to the golgi apparatus. Its subcellular location is the trans-Golgi network membrane. In terms of biological role, vesicle SNARE required for targeting and fusion of retrograde transport vesicles with the Golgi complex. Required for the integrity of the Golgi complex. In Homo sapiens (Human), this protein is BET1-like protein.